A 447-amino-acid chain; its full sequence is Argininosuccinate synthase (447 aa).

Residues 17–25 (AFSGGLDTS) and alanine 43 contribute to the ATP site. An L-citrulline-binding site is contributed by tyrosine 99. Residues glycine 129 and threonine 131 each coordinate ATP. L-aspartate is bound by residues threonine 131, asparagine 135, and aspartate 136. Asparagine 135 contributes to the L-citrulline binding site. Aspartate 136 lines the ATP pocket. Positions 139 and 192 each coordinate L-citrulline. Position 194 (aspartate 194) interacts with ATP. Residues threonine 201, glutamate 203, and glutamate 280 each coordinate L-citrulline.

Belongs to the argininosuccinate synthase family. Type 2 subfamily. As to quaternary structure, homotetramer.

It localises to the cytoplasm. It carries out the reaction L-citrulline + L-aspartate + ATP = 2-(N(omega)-L-arginino)succinate + AMP + diphosphate + H(+). Its pathway is amino-acid biosynthesis; L-arginine biosynthesis; L-arginine from L-ornithine and carbamoyl phosphate: step 2/3. The polypeptide is Argininosuccinate synthase (Escherichia coli O1:K1 / APEC).